Consider the following 61-residue polypeptide: Bowman-Birk type proteinase inhibitor (61 aa).

Cystine bridges form between C4/C57, C5/C20, C8/C53, C10/C18, C27/C34, C31/C46, and C36/C44.

Belongs to the Bowman-Birk serine protease inhibitor family.

In terms of biological role, strong inhibitor of trypsin with a 1:1 stoichiometry. Weaker inhibitor of chymotrypsin. The chain is Bowman-Birk type proteinase inhibitor from Erythrina variegata (Indian coral tree).